The following is a 717-amino-acid chain: uncharacterized protein (717 aa).

Residues 19–38 (VFLSTIFVSIIFCLGILFLV) form a helical membrane-spanning segment.

To E.coli YtfN.

The protein localises to the membrane. This is an uncharacterized protein from Buchnera aphidicola subsp. Baizongia pistaciae (strain Bp).